The following is a 353-amino-acid chain: Photosystem II protein D1 (353 aa).

T2 is modified (N-acetylthreonine). Residue T2 is modified to Phosphothreonine. The next 3 helical transmembrane spans lie at 29-46 (YIGWFGVIMIPCLLTAIS), 118-133 (HFLLGIACYMGREWEL), and 142-156 (WIAVAYSAPVAAATA). Residue H118 participates in chlorophyll a binding. A pheophytin a-binding site is contributed by Y126. Residues D170 and E189 each contribute to the [CaMn4O5] cluster site. Residues 197–218 (FHMLGVAGVFGGSLFSAMHGSL) form a helical membrane-spanning segment. Residue H198 coordinates chlorophyll a. A quinone is bound by residues H215 and 264-265 (SF). Fe cation is bound at residue H215. H272 provides a ligand contact to Fe cation. Residues 274 to 288 (FLAVWPVVGIWFTAM) traverse the membrane as a helical segment. Positions 332, 333, 342, and 344 each coordinate [CaMn4O5] cluster. Positions 345 to 353 (SVEAPAVNG) are excised as a propeptide.

The protein belongs to the reaction center PufL/M/PsbA/D family. In terms of assembly, PSII is composed of 1 copy each of membrane proteins PsbA, PsbB, PsbC, PsbD, PsbE, PsbF, PsbH, PsbI, PsbJ, PsbK, PsbL, PsbM, PsbT, PsbX, PsbY, PsbZ, Psb30/Ycf12, at least 3 peripheral proteins of the oxygen-evolving complex and a large number of cofactors. It forms dimeric complexes. It depends on The D1/D2 heterodimer binds P680, chlorophylls that are the primary electron donor of PSII, and subsequent electron acceptors. It shares a non-heme iron and each subunit binds pheophytin, quinone, additional chlorophylls, carotenoids and lipids. D1 provides most of the ligands for the Mn4-Ca-O5 cluster of the oxygen-evolving complex (OEC). There is also a Cl(-1) ion associated with D1 and D2, which is required for oxygen evolution. The PSII complex binds additional chlorophylls, carotenoids and specific lipids. as a cofactor. Tyr-161 forms a radical intermediate that is referred to as redox-active TyrZ, YZ or Y-Z. Post-translationally, C-terminally processed by CTPA; processing is essential to allow assembly of the oxygen-evolving complex and thus photosynthetic growth.

It is found in the plastid. Its subcellular location is the chloroplast thylakoid membrane. It carries out the reaction 2 a plastoquinone + 4 hnu + 2 H2O = 2 a plastoquinol + O2. Photosystem II (PSII) is a light-driven water:plastoquinone oxidoreductase that uses light energy to abstract electrons from H(2)O, generating O(2) and a proton gradient subsequently used for ATP formation. It consists of a core antenna complex that captures photons, and an electron transfer chain that converts photonic excitation into a charge separation. The D1/D2 (PsbA/PsbD) reaction center heterodimer binds P680, the primary electron donor of PSII as well as several subsequent electron acceptors. The sequence is that of Photosystem II protein D1 from Mesostigma viride (Green alga).